We begin with the raw amino-acid sequence, 616 residues long: RNA-directed RNA polymerase (616 aa).

It carries out the reaction RNA(n) + a ribonucleoside 5'-triphosphate = RNA(n+1) + diphosphate. In terms of biological role, RNA-dependent RNA polymerase which replicates the viral genome. The sequence is that of RNA-directed RNA polymerase from White clover cryptic virus 1 (isolate Boccardo/2004) (WCCV-1).